We begin with the raw amino-acid sequence, 2812 residues long: Zonadhesin (2812 aa).

The signal sequence occupies residues 1 to 17; it reads MVPPVWTLLLLVGAALF. The Extracellular portion of the chain corresponds to 18–2757; sequence RKEKPPDQKL…DAPPPRKPAS (2740 aa). 3 MAM domains span residues 39-204, 209-368, and 371-536; these read TQCD…SCNR, QTCS…PCGE, and PQCD…TCPV. Residues 61–84 are disordered; the sequence is EDWVRASGPSPTGSTGAPGGYPNG. A compositionally biased stretch (low complexity) spans 66 to 75; sequence ASGPSPTGST. Asn-333 and Asn-493 each carry an N-linked (GlcNAc...) asparagine glycan. Disordered stretches follow at residues 545 to 884 and 904 to 929; these read VSPV…PTEK and EKPT…KPTI. Residues 547–558 are compositionally biased toward low complexity; that stretch reads PVSSTGPSETTG. The span at 559 to 570 shows a compositional bias: polar residues; sequence LTENPTISTKKP. A 66 X heptapeptide repeats (approximate) (mucin-like domain) region spans residues 573-1041; the sequence is SIEKPSVTTE…GTTTTSRSST (469 aa). 5 stretches are compositionally biased toward low complexity: residues 592–603, 651–675, 713–842, 853–868, and 916–929; these read TIPTEKPTISTE, TEKP…MEEP, SPEK…STEK, STEK…TISP, and STEK…KPTI. Positions 1044–1093 constitute a TIL 1 domain; it reads CPPNARYESCACPASCKSPRPSCGPLCREGCVCNPGFLFSDNHCIQASSC. A VWFC 1 domain is found at 1103 to 1148; that stretch reads EPGAEWFSPNCTEHCRCWPGSRVECQISQCGTHTVCQLKNGQYGCH. Residues Asn-1112 and Asn-1188 are each glycosylated (N-linked (GlcNAc...) asparagine). In terms of domain architecture, VWFD 1 spans 1154 to 1331; it reads ATCLVYGDPH…TDQDEDQECQ (178 aa). Intrachain disulfides connect Cys-1156–Cys-1291 and Cys-1178–Cys-1330. The segment covering 1302 to 1316 has biased composition (basic and acidic residues); that stretch reads HLKLDGSPAGDKEEL. Residues 1302-1323 are disordered; it reads HLKLDGSPAGDKEELGNSWQTD. The TIL 2 domain occupies 1426–1479; it reads CPPNSKYSLCAKPCPDTCHSGFSGMFCSDRCVEACECNPGFVLSGLECIPRSQC. A VWFC 2 domain is found at 1480 to 1535; sequence GCLHPAGSYFKVGERWYKPGCKELCVCESNNRIRCQPWRCRAQEFCGQQDGIYGCH. Residues 1540–1720 enclose the VWFD 2 domain; that stretch reads ATCTASGDPH…LPESSEPGCF (181 aa). Cystine bridges form between Cys-1542–Cys-1680 and Cys-1564–Cys-1719. Residues Asn-1685 and Asn-1804 are each glycosylated (N-linked (GlcNAc...) asparagine). The TIL 3 domain maps to 1812–1867; the sequence is CPPGSSYSPCSSPCPDTCSSINNPRDCPKALPCAESCECQKGHILSGTSCVPLGQC. Residues 1868–1924 form the VWFC 3 domain; that stretch reads GCTDPAGSYHPVGERWYTENTCTRLCTCSVHNNITCFQSTCKPNQICWALDGLLHCR. Residues Asn-1900 and Asn-1946 are each glycosylated (N-linked (GlcNAc...) asparagine). The VWFD 3 domain maps to 1929–2108; the sequence is GVCQLPGESH…KDKDIDPSCQ (180 aa). 2 cysteine pairs are disulfide-bonded: Cys-1931/Cys-2069 and Cys-1953/Cys-2107. Residue Asn-2203 is glycosylated (N-linked (GlcNAc...) asparagine). One can recognise a TIL 4 domain in the interval 2211–2267; that stretch reads CPAYSSYTNCLPSCSPSCWDLDGRCEGAKVPSACAEGCICQPGYVLSEDKCVPRSQC. The region spanning 2268–2329 is the VWFC 4 domain; the sequence is GCKDAHGGSI…NSNCVSDKSE (62 aa). The region spanning 2329 to 2505 is the VWFD 4 domain; sequence EQCSVYGDPR…SWEVKTEDAL (177 aa). Cysteines 2331 and 2468 form a disulfide. N-linked (GlcNAc...) asparagine glycosylation is found at Asn-2542 and Asn-2701. Positions 2652–2797 constitute a VWFC 5 domain; the sequence is CGCTSNGIYY…KREKTQEGDR (146 aa). Residues 2708–2744 form the EGF-like domain; it reads PESPCLQNPCQNDGQCREQGATFTCECEVGYGGGLCM. 3 cysteine pairs are disulfide-bonded: Cys-2712/Cys-2723, Cys-2717/Cys-2732, and Cys-2734/Cys-2743. Residues 2758–2778 traverse the membrane as a helical segment; sequence NLVGVLLGLLVPVVVVLLAVT. Over 2779–2812 the chain is Cytoplasmic; the sequence is RECIYRTRRKREKTQEGDRLARLVDTDTVLDCAC.

In terms of assembly, probably forms covalent oligomers. As to expression, in testis, primarily in haploid spermatids.

It localises to the cell membrane. Binds in a species-specific manner to the zona pellucida of the egg. May be involved in gamete recognition and/or signaling. In Homo sapiens (Human), this protein is Zonadhesin (ZAN).